Consider the following 1025-residue polypeptide: Multidrug resistance protein MdtC (1025 aa).

The Cytoplasmic segment spans residues 1–6; that stretch reads MKFFAL. The helical transmembrane segment at 7-29 threads the bilayer; sequence FIYRPVATILLSVAITLCGILGF. Residues 30-335 are Periplasmic-facing; sequence RMLPVAPLPQ…TIRASLEEVE (306 aa). Residues 336 to 353 traverse the membrane as a helical segment; it reads QTLIISVALVILVVFLFL. The Cytoplasmic segment spans residues 354–359; that stretch reads RSGRAT. Residues 360 to 379 form a helical membrane-spanning segment; that stretch reads IIPAVAVPVSLIGTFAAMYL. Over 380–388 the chain is Periplasmic; sequence CGFSLNNLS. Residues 389-411 traverse the membrane as a helical segment; that stretch reads LMALTIATGFVVDDAIVVLENIA. Residues 412-430 are Cytoplasmic-facing; the sequence is RHLEAGMKPLQAALQGTRE. Residues 431–453 form a helical membrane-spanning segment; it reads VGFTVLSMSLSLVAVFLPLLLMG. Topologically, residues 454 to 467 are periplasmic; it reads GLPGRLLREFAVTL. Residues 468–490 form a helical membrane-spanning segment; the sequence is SVAIGISLLVSLTLTPMMCGWML. Topologically, residues 491 to 852 are cytoplasmic; the sequence is KASKPREQKR…QVFQETMNSQ (362 aa). The helical transmembrane segment at 853 to 875 threads the bilayer; it reads VILIIAAIATVYIVLGILYESYV. Topologically, residues 876-894 are periplasmic; it reads HPLTILSTLPSAGVGALLA. The helical transmembrane segment at 895-917 threads the bilayer; it reads LELFNAPFSLIALIGIMLLIGIV. Over 918-947 the chain is Cytoplasmic; it reads KKNAIMMVDFALEAQRHGNLTPQEAIFQAC. The helical transmembrane segment at 948 to 970 threads the bilayer; it reads LLRFRPIMMTTLAALFGALPLVL. The Periplasmic segment spans residues 971-984; sequence SGGDGSELRQPLGI. A helical membrane pass occupies residues 985–1007; it reads TIVGGLVMSQLLTLYTTPVVYLF. Residues 1008 to 1025 lie on the Cytoplasmic side of the membrane; sequence FDRLRLRFSRKPKQAVTE.

Belongs to the resistance-nodulation-cell division (RND) (TC 2.A.6) family. MdtC subfamily. In terms of assembly, part of a tripartite efflux system composed of MdtA, MdtB and MdtC. MdtC forms a heteromultimer with MdtB.

It is found in the cell inner membrane. Its function is as follows. The MdtABC tripartite complex confers resistance against novobiocin and deoxycholate. The protein is Multidrug resistance protein MdtC of Escherichia coli O6:H1 (strain CFT073 / ATCC 700928 / UPEC).